The following is a 565-amino-acid chain: NAD-dependent malic enzyme (565 aa).

The active-site Proton donor is tyrosine 104. Position 157 (arginine 157) interacts with NAD(+). The active-site Proton acceptor is lysine 175. A divalent metal cation is bound by residues glutamate 246, aspartate 247, and aspartate 270. Aspartate 270 and asparagine 418 together coordinate NAD(+).

Belongs to the malic enzymes family. Homotetramer. Mg(2+) is required as a cofactor. Requires Mn(2+) as cofactor.

It catalyses the reaction (S)-malate + NAD(+) = pyruvate + CO2 + NADH. The catalysed reaction is oxaloacetate + H(+) = pyruvate + CO2. This Erwinia tasmaniensis (strain DSM 17950 / CFBP 7177 / CIP 109463 / NCPPB 4357 / Et1/99) protein is NAD-dependent malic enzyme.